A 450-amino-acid polypeptide reads, in one-letter code: Ornithine decarboxylase (450 aa).

Position 59 is an N6-(pyridoxal phosphate)lysine (K59). Residues S190, G227, and E264 to R267 each bind pyridoxal 5'-phosphate. Residue S293 is modified to Phosphoserine; by CK2. Y321–D322 is a substrate binding site. The active-site Proton donor; shared with dimeric partner is the C350. D351 is a binding site for substrate. Y379 serves as a coordination point for pyridoxal 5'-phosphate.

It belongs to the Orn/Lys/Arg decarboxylase class-II family. In terms of assembly, homodimer. Only the dimer is catalytically active, as the active sites are constructed of residues from both monomers. It depends on pyridoxal 5'-phosphate as a cofactor.

It carries out the reaction L-ornithine + H(+) = putrescine + CO2. It functions in the pathway amine and polyamine biosynthesis; putrescine biosynthesis via L-ornithine pathway; putrescine from L-ornithine: step 1/1. Inhibited by antizymes (AZs) in response to polyamine levels. AZs inhibit the assembly of the functional homodimer by binding to ODC monomers and targeting them for ubiquitin-independent proteolytic destruction by the 26S proteasome. Its function is as follows. Catalyzes the first and rate-limiting step of polyamine biosynthesis that converts ornithine into putrescine, which is the precursor for the polyamines, spermidine and spermine. Polyamines are essential for cell proliferation and are implicated in cellular processes, ranging from DNA replication to apoptosis. The chain is Ornithine decarboxylase (ODC1) from Gallus gallus (Chicken).